A 206-amino-acid polypeptide reads, in one-letter code: 7-methyl-GTP pyrophosphatase (206 aa).

D82 serves as the catalytic Proton acceptor.

The protein belongs to the Maf family. YceF subfamily. A divalent metal cation serves as cofactor.

The protein resides in the cytoplasm. It carries out the reaction N(7)-methyl-GTP + H2O = N(7)-methyl-GMP + diphosphate + H(+). Its function is as follows. Nucleoside triphosphate pyrophosphatase that hydrolyzes 7-methyl-GTP (m(7)GTP). May have a dual role in cell division arrest and in preventing the incorporation of modified nucleotides into cellular nucleic acids. In Shewanella denitrificans (strain OS217 / ATCC BAA-1090 / DSM 15013), this protein is 7-methyl-GTP pyrophosphatase.